Here is an 86-residue protein sequence, read N- to C-terminus: uncharacterized protein (86 aa).

To M.jannaschii MJ1173.

This is an uncharacterized protein from Methanosarcina mazei (strain ATCC BAA-159 / DSM 3647 / Goe1 / Go1 / JCM 11833 / OCM 88) (Methanosarcina frisia).